A 202-amino-acid chain; its full sequence is Small ribosomal subunit protein uS4 (202 aa).

Residues 16–43 (GELPGLSRKTPRRAYPPGQHGQGRRKRS) are disordered. Positions 90 to 152 (MRLDNTVFRL…DNSRRMVETN (63 aa)) constitute an S4 RNA-binding domain.

The protein belongs to the universal ribosomal protein uS4 family. Part of the 30S ribosomal subunit. Contacts protein S5. The interaction surface between S4 and S5 is involved in control of translational fidelity.

In terms of biological role, one of the primary rRNA binding proteins, it binds directly to 16S rRNA where it nucleates assembly of the body of the 30S subunit. Its function is as follows. With S5 and S12 plays an important role in translational accuracy. The polypeptide is Small ribosomal subunit protein uS4 (Crocosphaera subtropica (strain ATCC 51142 / BH68) (Cyanothece sp. (strain ATCC 51142))).